The sequence spans 196 residues: Peptide deformylase (196 aa).

Fe cation is bound by residues Cys123 and His166. Residue Glu167 is part of the active site. Residue His170 coordinates Fe cation.

This sequence belongs to the polypeptide deformylase family. Requires Fe(2+) as cofactor.

The enzyme catalyses N-terminal N-formyl-L-methionyl-[peptide] + H2O = N-terminal L-methionyl-[peptide] + formate. In terms of biological role, removes the formyl group from the N-terminal Met of newly synthesized proteins. Requires at least a dipeptide for an efficient rate of reaction. N-terminal L-methionine is a prerequisite for activity but the enzyme has broad specificity at other positions. This chain is Peptide deformylase, found in Lactococcus lactis subsp. lactis (strain IL1403) (Streptococcus lactis).